The sequence spans 537 residues: MSKQIEFNEVARRSLERGVDKLADAVKVTLGPRGRHVVLAKAFGGPTVTNDGVSIAREIELEDPFENLGAQLVKSVATKTNDVAGDGTTTATVLAQAIVRGGLKNIAAGANPMALGIGINAAADKVVEALLAAAKPVEGKTSIAQVATVSSRDEEIGEMVGEALTRVGTDGVVTVEESSTLATELVITEGVQFDKGYLSPYFVTDLDAQKAVYEDALVLLYREKITSLPDFLPLLEKVAESGKPLLIIAEDVEGEVLSTLVVNSIRKTIKAVAVKAPFFGDRRKAFLDDLAVVTGGTVINSDVGLTLKDAGLDLLGSARRVVVSKDETTIVDGAGTDDDIKGRVAQLRREIENTDSDWDREKLEERLAKLAGGVAVIKVGAATETDLKERKFRVEDAVNAAKAAVAEGIVPGGGSALVQASTELADNLGLTGDEATGVKVVREALQAPLYWIASNAGLDGSVVTSKVAEQPKGHGFNAATLTYGDLLADGVVDPVKVTRSAVVNAASVARMILTTESAVVEKPAEENEQQTGHGHSH.

ATP is bound by residues 29-32 (TLGP), 86-90 (DGTTT), glycine 413, 477-479 (NAA), and aspartate 493.

The protein belongs to the chaperonin (HSP60) family. Forms a cylinder of 14 subunits composed of two heptameric rings stacked back-to-back. Interacts with the co-chaperonin GroES.

The protein localises to the cytoplasm. The enzyme catalyses ATP + H2O + a folded polypeptide = ADP + phosphate + an unfolded polypeptide.. Its function is as follows. Together with its co-chaperonin GroES, plays an essential role in assisting protein folding. The GroEL-GroES system forms a nano-cage that allows encapsulation of the non-native substrate proteins and provides a physical environment optimized to promote and accelerate protein folding. This chain is Chaperonin GroEL 2, found in Rhodococcus jostii (strain RHA1).